A 70-amino-acid polypeptide reads, in one-letter code: Myotoxin (70 aa).

An N-terminal signal peptide occupies residues 1-22; it reads MKILYLLFAFLFLAFLSEPGNA. 3 cysteine pairs are disulfide-bonded: cysteine 26-cysteine 58, cysteine 33-cysteine 52, and cysteine 40-cysteine 59.

The protein belongs to the crotamine-myotoxin family. In terms of assembly, monomer. Expressed by the venom gland.

It is found in the secreted. In terms of biological role, cationic peptide that possesses multiple functions. It acts as a cell-penetrating peptide (CPP), and as a potent voltage-gated potassium channel (Kv) inhibitor. It exhibits antimicrobial activities, hind limb paralysis, and severe muscle necrosis by a non-enzymatic mechanism. In Crotalus adamanteus (Eastern diamondback rattlesnake), this protein is Myotoxin.